The following is a 625-amino-acid chain: Probable receptor-like protein kinase At1g11050 (625 aa).

An N-terminal signal peptide occupies residues 1–20 (MPNSILFLLLSFLYLTNCVA). Over 21-227 (QSPSQTCPLD…PLNSKKKRHT (207 aa)) the chain is Extracellular. N-linked (GlcNAc...) asparagine glycosylation is found at Asn-40, Asn-106, Asn-121, and Asn-177. The helical transmembrane segment at 228–248 (VALALGITGAIFGALVIAGLI) threads the bilayer. The Cytoplasmic portion of the chain corresponds to 249–625 (CLYFRFGKAV…LQIHSGDMLR (377 aa)). The region spanning 295–555 (FSQKNFIGRG…NPKGIMERFL (261 aa)) is the Protein kinase domain. ATP contacts are provided by residues 301–309 (IGRGGFGFV) and Lys-323. Asp-426 serves as the catalytic Proton acceptor.

Belongs to the protein kinase superfamily. Ser/Thr protein kinase family.

It is found in the membrane. The catalysed reaction is L-seryl-[protein] + ATP = O-phospho-L-seryl-[protein] + ADP + H(+). It carries out the reaction L-threonyl-[protein] + ATP = O-phospho-L-threonyl-[protein] + ADP + H(+). The chain is Probable receptor-like protein kinase At1g11050 from Arabidopsis thaliana (Mouse-ear cress).